Reading from the N-terminus, the 487-residue chain is Probable Xaa-Pro aminopeptidase AFUB_014460 (487 aa).

The Mn(2+) site is built by D267, D278, E416, and E455.

The protein belongs to the peptidase M24B family. It depends on Mn(2+) as a cofactor.

It catalyses the reaction Release of any N-terminal amino acid, including proline, that is linked to proline, even from a dipeptide or tripeptide.. Functionally, catalyzes the removal of a penultimate prolyl residue from the N-termini of peptides. The chain is Probable Xaa-Pro aminopeptidase AFUB_014460 from Aspergillus fumigatus (strain CBS 144.89 / FGSC A1163 / CEA10) (Neosartorya fumigata).